Reading from the N-terminus, the 101-residue chain is Urinary protein 2 (101 aa).

A signal peptide spans Met-1–Ala-21. The region spanning Leu-22–Val-99 is the UPAR/Ly6 domain. Cystine bridges form between Cys-24–Cys-51, Cys-27–Cys-36, Cys-43–Cys-70, Cys-73–Cys-89, and Cys-90–Cys-96. N-linked (GlcNAc...) asparagine glycosylation is found at Asn-67 and Asn-74.

N-glycosylated.

It is found in the secreted. The sequence is that of Urinary protein 2 from Rattus norvegicus (Rat).